The primary structure comprises 597 residues: Bile salt-activated lipase (597 aa).

Positions 1–18 (LGASRLGPSPGCLAVASA) are cleaved as a signal peptide. A disulfide bridge connects residues Cys82 and Cys98. Asn205 is a glycosylation site (N-linked (GlcNAc...) asparagine). Ser212 serves as the catalytic Acyl-ester intermediate. Residues Cys264 and Cys275 are joined by a disulfide bond. The active-site Charge relay system is the Asp338. Asn379 carries an N-linked (GlcNAc...) asparagine glycan. His453 (charge relay system) is an active-site residue. The tract at residues 553-591 (AGASLLPPEDNSQASPVPPADNSGAPTEPSAGDSEVAQM) is disordered.

It belongs to the type-B carboxylesterase/lipase family. As to quaternary structure, interacts with CLC.

It localises to the secreted. It catalyses the reaction a triacylglycerol + H2O = a diacylglycerol + a fatty acid + H(+). The catalysed reaction is 1,2,3-tri-(9Z-octadecenoyl)-glycerol + H2O = di-(9Z)-octadecenoylglycerol + (9Z)-octadecenoate + H(+). It carries out the reaction 1,2,3-trioctanoylglycerol + H2O = dioctanoylglycerol + octanoate + H(+). The enzyme catalyses a sterol ester + H2O = a sterol + a fatty acid + H(+). It catalyses the reaction cholesteryl (9Z-octadecenoate) + H2O = cholesterol + (9Z)-octadecenoate + H(+). The catalysed reaction is an acetyl ester + H2O = an aliphatic alcohol + acetate + H(+). It carries out the reaction a butanoate ester + H2O = an aliphatic alcohol + butanoate + H(+). The enzyme catalyses 9-hexadecanoyloxy-octadecanoate + H2O = 9-hydroxy-octadecanoate + hexadecanoate + H(+). It catalyses the reaction 9-(9Z-octadecenoyloxy)-octadecanoate + H2O = 9-hydroxy-octadecanoate + (9Z)-octadecenoate + H(+). The catalysed reaction is 1-hexadecanoyl-sn-glycero-3-phosphocholine + H2O = sn-glycerol 3-phosphocholine + hexadecanoate + H(+). It carries out the reaction 12-hexadecanoyloxy-octadecanoate + H2O = 12-hydroxyoctadecanoate + hexadecanoate + H(+). The enzyme catalyses 12-(9Z-octadecenoyloxy)-octadecanoate + H2O = 12-hydroxyoctadecanoate + (9Z)-octadecenoate + H(+). It catalyses the reaction 13-(9Z-octadecenoyloxy)-octadecanoate + H2O = 13-hydroxy-octadecanoate + (9Z)-octadecenoate + H(+). The catalysed reaction is 9-(9Z-hexadecenoyloxy)-octadecanoate + H2O = (9Z)-hexadecenoate + 9-hydroxy-octadecanoate + H(+). It carries out the reaction 12-(9Z-hexadecenoyloxy)-octadecanoate + H2O = 12-hydroxyoctadecanoate + (9Z)-hexadecenoate + H(+). The enzyme catalyses 13-(9Z-hexadecenoyloxy)-octadecanoate + H2O = 13-hydroxy-octadecanoate + (9Z)-hexadecenoate + H(+). It catalyses the reaction 12-octadecanoyloxy-octadecanoate + H2O = 12-hydroxyoctadecanoate + octadecanoate + H(+). The catalysed reaction is 13-octadecanoyloxy-octadecanoate + H2O = 13-hydroxy-octadecanoate + octadecanoate + H(+). It carries out the reaction 5-(9Z-hexadecenoyloxy)-octadecanoate + H2O = 5-hydroxy-octadecanoate + (9Z)-hexadecenoate + H(+). The enzyme catalyses 9-octadecanoyloxy-octadecanoate + H2O = 9-hydroxy-octadecanoate + octadecanoate + H(+). With respect to regulation, activated by bile salts such as sodium taurocholate. Catalyzes the hydrolysis of a wide range of substrates including cholesteryl esters, phospholipids, lysophospholipids, di- and tri-acylglycerols, and fatty acid esters of hydroxy fatty acids (FAHFA). Preferentially hydrolyzes FAHFAs with the ester bond further away from the carboxylate. Unsaturated FAHFAs are hydrolyzed more quickly than saturated FAHFAs. Has an essential role in the complete digestion of dietary lipids and their intestinal absorption, along with the absorption of fat-soluble vitamins. The chain is Bile salt-activated lipase (CEL) from Bos taurus (Bovine).